A 469-amino-acid chain; its full sequence is Argininosuccinate lyase (469 aa).

The protein belongs to the lyase 1 family. Argininosuccinate lyase subfamily.

It is found in the cytoplasm. It carries out the reaction 2-(N(omega)-L-arginino)succinate = fumarate + L-arginine. The protein operates within amino-acid biosynthesis; L-arginine biosynthesis; L-arginine from L-ornithine and carbamoyl phosphate: step 3/3. The chain is Argininosuccinate lyase from Burkholderia thailandensis (strain ATCC 700388 / DSM 13276 / CCUG 48851 / CIP 106301 / E264).